The primary structure comprises 381 residues: Acetylornithine deacetylase (381 aa).

Position 79 (H79) interacts with Zn(2+). The active site involves D81. D111 contacts Zn(2+). E143 is a catalytic residue. Residues E144, E168, and H354 each coordinate Zn(2+).

It belongs to the peptidase M20A family. ArgE subfamily. Homodimer. The cofactor is Zn(2+). Co(2+) serves as cofactor. Glutathione is required as a cofactor.

The protein localises to the cytoplasm. The catalysed reaction is N(2)-acetyl-L-ornithine + H2O = L-ornithine + acetate. It functions in the pathway amino-acid biosynthesis; L-arginine biosynthesis; L-ornithine from N(2)-acetyl-L-ornithine (linear): step 1/1. Functionally, catalyzes the hydrolysis of the amide bond of N(2)-acetylated L-amino acids. Cleaves the acetyl group from N-acetyl-L-ornithine to form L-ornithine, an intermediate in L-arginine biosynthesis pathway, and a branchpoint in the synthesis of polyamines. This Buchnera aphidicola subsp. Acyrthosiphon pisum (strain APS) (Acyrthosiphon pisum symbiotic bacterium) protein is Acetylornithine deacetylase.